The following is a 205-amino-acid chain: High frequency lysogenization protein HflD homolog (205 aa).

It belongs to the HflD family.

It localises to the cytoplasm. It is found in the cell inner membrane. In Shewanella pealeana (strain ATCC 700345 / ANG-SQ1), this protein is High frequency lysogenization protein HflD homolog.